A 231-amino-acid chain; its full sequence is Small ribosomal subunit protein uS3 (231 aa).

One can recognise a KH type-2 domain in the interval 17–86; that stretch reads VEQYLNKELK…SPQVEVQQVA (70 aa).

It belongs to the universal ribosomal protein uS3 family. Part of the 30S ribosomal subunit.

Binds the lower part of the 30S subunit head. The protein is Small ribosomal subunit protein uS3 of Methanocorpusculum labreanum (strain ATCC 43576 / DSM 4855 / Z).